The following is a 272-amino-acid chain: HMP-PP phosphatase (272 aa).

D8 functions as the Nucleophile in the catalytic mechanism. 3 residues coordinate Mg(2+): D8, D10, and D212.

The protein belongs to the HAD-like hydrolase superfamily. Cof family. It depends on Mg(2+) as a cofactor.

The catalysed reaction is 4-amino-2-methyl-5-(diphosphooxymethyl)pyrimidine + H2O = 4-amino-2-methyl-5-(phosphooxymethyl)pyrimidine + phosphate + H(+). Catalyzes the hydrolysis of 4-amino-2-methyl-5-hydroxymethylpyrimidine pyrophosphate (HMP-PP) to 4-amino-2-methyl-5-hydroxymethylpyrimidine phosphate (HMP-P). In Salmonella enteritidis PT4 (strain P125109), this protein is HMP-PP phosphatase.